The primary structure comprises 143 residues: MAETSNVLRVNIVTPDGLVYDHHARMLVVHSVAGELGIMANHEPIVTPLEIGEVDVQRVDASDHNDSIAVNGGFMEVSENVASIVADSAERERDIDLSRAQAARDRAQKRIAQAKNDHNQDDLRRAQVALRRAINRINVKTSH.

This sequence belongs to the ATPase epsilon chain family. In terms of assembly, F-type ATPases have 2 components, CF(1) - the catalytic core - and CF(0) - the membrane proton channel. CF(1) has five subunits: alpha(3), beta(3), gamma(1), delta(1), epsilon(1). CF(0) has three main subunits: a, b and c.

It is found in the cell membrane. In terms of biological role, produces ATP from ADP in the presence of a proton gradient across the membrane. The chain is ATP synthase epsilon chain from Lacticaseibacillus casei (strain BL23) (Lactobacillus casei).